A 495-amino-acid chain; its full sequence is Protein adenylyltransferase Fic (495 aa).

The segment at Met-1–Asn-27 is disordered. A helical transmembrane segment spans residues Leu-36–Ala-55. TPR repeat units follow at residues Ala-121 to His-154 and Pro-155 to Asn-189. The short motif at Ser-246–Gly-251 is the Inhibitory (S/T)XXXE(G/N) motif element. ATP contacts are provided by residues Glu-250 and Val-331 to His-334. The region spanning Ile-300–Asp-435 is the Fido domain. His-378 is an active-site residue. Residues Asp-382–Arg-389, Tyr-414–Tyr-415, and Asn-422 each bind ATP.

The protein belongs to the fic family. Homodimer.

It localises to the membrane. It catalyses the reaction L-tyrosyl-[protein] + ATP = O-(5'-adenylyl)-L-tyrosyl-[protein] + diphosphate. The catalysed reaction is L-threonyl-[protein] + ATP = 3-O-(5'-adenylyl)-L-threonyl-[protein] + diphosphate. The enzyme catalyses 3-O-(5'-adenylyl)-L-threonyl-[protein] + H2O = L-threonyl-[protein] + AMP + H(+). With respect to regulation, the side chain of Glu-250 determines which of the two opposing activities (AMPylase or de-AMPylase) will take place. In response to endoplasmic reticulum stress, mediates de-AMPylase activity. Adenylyltransferase activity is inhibited by the inhibitory helix present at the N-terminus: Glu-250 binds ATP and competes with ATP-binding at Arg-389, thereby preventing adenylyltransferase activity. In unstressed cells, disengagement of Glu-250 promotes adenylyltransferase activity. Activation dissociates ATP-binding from Glu-250, allowing ordered binding of the entire ATP moiety with the alpha-phosphate in an orientation that is productive for accepting an incoming target hydroxyl side chain. In terms of biological role, protein that can both mediate the addition of adenosine 5'-monophosphate (AMP) to specific residues of target proteins (AMPylation), and the removal of the same modification from target proteins (de-AMPylation), depending on the context. The side chain of Glu-250 determines which of the two opposing activities (AMPylase or de-AMPylase) will take place. Acts as a key regulator of the unfolded protein response (UPR) by mediating AMPylation or de-AMPylation of Hsc70-3/BiP. In unstressed cells, acts as an adenylyltransferase by mediating AMPylation of Hsc70-3/BiP at 'Thr-518', thereby inactivating it. In response to endoplasmic reticulum stress, acts as a phosphodiesterase by mediating removal of ATP (de-AMPylation) from Hsc70-3/BiP at 'Thr-518', leading to restore HSPA5/BiP activity. In Drosophila yakuba (Fruit fly), this protein is Protein adenylyltransferase Fic.